We begin with the raw amino-acid sequence, 707 residues long: Acyl-CoA ligase 891, peroxisomal (707 aa).

Ile259–Lys270 is an ATP binding site. Positions Asp525–Lys549 are fatty acid-binding. The short motif at Ala705 to Leu707 is the Peroxisome targeting signal element.

This sequence belongs to the ATP-dependent AMP-binding enzyme family.

The protein resides in the peroxisome matrix. It catalyses the reaction (4E,8E)-10-(4-hydroxy-6-methoxy-7-methyl-3-oxo-1,3-dihydro-2-benzofuran-5-yl)-4,8-dimethyldeca-4,8-dienoate + ATP + CoA = (4E,8E)-10-(4-hydroxy-6-methoxy-7-methyl-3-oxo-1,3-dihydro-2-benzofuran-5-yl)-4,8-dimethyldeca-4,8-dienoyl-CoA + AMP + diphosphate. It participates in secondary metabolite biosynthesis; terpenoid biosynthesis. In terms of biological role, acyl-CoA ligase involved in the biosynthesis of mycophenolic acid (MPA), the first isolated antibiotic natural product in the world obtained from a culture of Penicillium brevicompactum in 1893. The peroxisomal acyl-CoA ligase 891 converts the intermediate MFDHMP-3C into MFDHMP-3C-CoA which impairs its diffusion from the peroxisome. The first step of the pathway is the synthesis of 5-methylorsellinic acid (5MOA) by the cytosolic polyketide synthase mpaC. 5MOA is then converted to the phthalide compound 5,7-dihydroxy-4,6-dimethylphthalide (DHMP) by the endoplasmic reticulum-bound cytochrome P450 monooxygenase mpaDE. MpaDE first catalyzes hydroxylation of 5-MOA to 4,6-dihydroxy-2-(hydroxymethyl)-3-methylbenzoic acid (DHMB). MpaDE then acts as a lactone synthase that catalyzes the ring closure to convert DHMB into DHMP. The next step is the prenylation of DHMP by the Golgi apparatus-associated prenyltransferase mpaA to yield farnesyl-DHMP (FDHMP). The ER-bound oxygenase mpaB then mediates the oxidative cleavage the C19-C20 double bond in FDHMP to yield FDHMP-3C via a mycophenolic aldehyde intermediate. The O-methyltransferase mpaG catalyzes the methylation of FDHMP-3C to yield MFDHMP-3C. After the cytosolic methylation of FDHMP-3C, MFDHMP-3C enters into peroxisomes probably via free diffusion due to its low molecular weight. Upon a peroxisomal CoA ligation reaction, catalyzed by a beta-oxidation component enzyme acyl-CoA ligase ACL891, MFDHMP-3C-CoA would then be restricted to peroxisomes for the following beta-oxidation pathway steps. The peroxisomal beta-oxidation machinery than converts MFDHMP-3C-CoA into MPA_CoA, via a beta-oxidation chain-shortening process. Finally mpaH acts as a peroxisomal acyl-CoA hydrolase with high substrate specificity toward MPA-CoA to release the final product MPA. The chain is Acyl-CoA ligase 891, peroxisomal from Penicillium brevicompactum.